A 291-amino-acid polypeptide reads, in one-letter code: MIQIFFLGTGAGSPSKKRKLPAFLVRREGLNILLDCGEGTQYTLMNNKLGINSIKIIGITHMHGDHVFGLLGVIASMGLLDRKETLYILGPRDLKDFLYTSFEYSKFNPSFKIEFIDNYNDQNITIATFKTCHTVESQGYLISERDRVKIDEEKLEKEKIKDWRVMRKLKEGKTVEYNGKFLKPEDYLVIKRGLKVAYTGDTIPCQSVIESVKGVDLLIHDSTFLNEPSACTYGHSNVADAAKVALEASVKLLALTHISPRYEDVTEHLKVARRIFPKSILPDDLSYITLK.

His-61, His-63, Asp-65, His-66, His-133, Asp-201, and His-257 together coordinate Zn(2+). Residue Asp-65 is the Proton acceptor of the active site.

This sequence belongs to the RNase Z family. As to quaternary structure, homodimer. It depends on Zn(2+) as a cofactor.

It carries out the reaction Endonucleolytic cleavage of RNA, removing extra 3' nucleotides from tRNA precursor, generating 3' termini of tRNAs. A 3'-hydroxy group is left at the tRNA terminus and a 5'-phosphoryl group is left at the trailer molecule.. Its function is as follows. Zinc phosphodiesterase, which displays some tRNA 3'-processing endonuclease activity. Probably involved in tRNA maturation, by removing a 3'-trailer from precursor tRNA. The polypeptide is Ribonuclease Z (Saccharolobus islandicus (strain M.16.27) (Sulfolobus islandicus)).